Reading from the N-terminus, the 290-residue chain is Ribosome-inactivating protein bryodin I (290 aa).

The first 23 residues, 1–23 (MIKLLVLWLLILTIFLKSPTVEG), serve as a signal peptide directing secretion. Catalysis depends on residues glutamate 183 and glutamate 212. 2 N-linked (GlcNAc...) asparagine glycosylation sites follow: asparagine 214 and asparagine 250. The propeptide at 271 to 290 (AIGEDISMTLIGFEHGLYGI) is removed in mature form.

It belongs to the ribosome-inactivating protein family. Type 1 RIP subfamily. Appears to undergo proteolytic cleavage in the C-terminal to produce a shorter protein.

The catalysed reaction is Endohydrolysis of the N-glycosidic bond at one specific adenosine on the 28S rRNA.. Functionally, ribosome-inactivating protein of type 1, inhibits protein synthesis in animal cells. The sequence is that of Ribosome-inactivating protein bryodin I from Bryonia dioica (Red bryony).